The chain runs to 196 residues: Peptidyl-tRNA hydrolase (196 aa).

A tRNA-binding site is contributed by Tyr18. His23 functions as the Proton acceptor in the catalytic mechanism. 3 residues coordinate tRNA: Phe69, Asn71, and Asn117.

The protein belongs to the PTH family. In terms of assembly, monomer.

The protein resides in the cytoplasm. It carries out the reaction an N-acyl-L-alpha-aminoacyl-tRNA + H2O = an N-acyl-L-amino acid + a tRNA + H(+). Hydrolyzes ribosome-free peptidyl-tRNAs (with 1 or more amino acids incorporated), which drop off the ribosome during protein synthesis, or as a result of ribosome stalling. Functionally, catalyzes the release of premature peptidyl moieties from peptidyl-tRNA molecules trapped in stalled 50S ribosomal subunits, and thus maintains levels of free tRNAs and 50S ribosomes. In Aliivibrio fischeri (strain MJ11) (Vibrio fischeri), this protein is Peptidyl-tRNA hydrolase.